The chain runs to 222 residues: Putative cobalt transport protein CbiM (222 aa).

6 helical membrane passes run 8-28 (LPME…GYGI), 43-63 (PLLA…LPSV), 75-95 (LGAI…VLLF), 107-127 (TLGA…YLVF), 134-154 (LNIT…TYLT), and 178-198 (IFAI…ALLW).

This sequence belongs to the CbiM family. Forms an energy-coupling factor (ECF) transporter complex composed of an ATP-binding protein (A component, CbiO), a transmembrane protein (T component, CbiQ) and 2 possible substrate-capture proteins (S components, CbiM and CbiN) of unknown stoichimetry.

It localises to the cell membrane. The protein operates within cofactor biosynthesis; adenosylcobalamin biosynthesis. In terms of biological role, part of the energy-coupling factor (ECF) transporter complex CbiMNOQ involved in cobalt import. In Methanococcus voltae (strain ATCC BAA-1334 / A3), this protein is Putative cobalt transport protein CbiM.